Reading from the N-terminus, the 464-residue chain is RYamide receptor (464 aa).

At 1-105 (MEHHNSHLLP…EDMWSSAYFK (105 aa)) the chain is on the extracellular side. N-linked (GlcNAc...) asparagine glycans are attached at residues Asn-49, Asn-79, and Asn-85. Residues 106–126 (IIVYMLYIPIFIFALIGNGTV) form a helical membrane-spanning segment. Topologically, residues 127–148 (CYIVYSTPRMRTVTNYFIASLA) are cytoplasmic. Residues 149 to 169 (IGDILMSFFCVPSSFISLFIL) traverse the membrane as a helical segment. Topologically, residues 170–189 (NYWPFGLALCHFVNYSQAVS) are extracellular. Residue Asn-183 is glycosylated (N-linked (GlcNAc...) asparagine). A helical membrane pass occupies residues 190–210 (VLVSAYTLVAISIDRYIAIMW). At 211 to 221 (PLKPRITKRYA) the chain is on the cytoplasmic side. A helical transmembrane segment spans residues 222–242 (TFIIAGVWFIALATALPIPIV). Topologically, residues 243-274 (SGLDIPMSPWHTKCEKYICREMWPSRTQEYYY) are extracellular. The chain crosses the membrane as a helical span at residues 275-295 (TLSLFALQFVVPLGVLIFTYA). The Cytoplasmic segment spans residues 296 to 329 (RITIRVWAKRPPGEAETNRDQRMARSKRKMVKMM). A helical transmembrane segment spans residues 330-350 (LTVVIVFTCCWLPFNILQLLL). Residues 351–363 (NDEEFAHWDPLPY) are Extracellular-facing. The chain crosses the membrane as a helical span at residues 364 to 384 (VWFAFHWLAMSHCCYNPIIYC). Topologically, residues 385–464 (YMNARFRSGF…LSCGETSPLR (80 aa)) are cytoplasmic.

This sequence belongs to the G-protein coupled receptor 1 family.

The protein resides in the cell membrane. Functionally, receptor for the neuropeptides RYamide-1 and RYamide-2. The activity of this receptor is mediated by G proteins which activate a phosphatidyl-inositol-calcium second messenger system. RYamide signaling may suppress feeding behavior. The sequence is that of RYamide receptor from Drosophila melanogaster (Fruit fly).